The following is a 401-amino-acid chain: 8-amino-7-oxononanoate synthase (401 aa).

R24 is a binding site for substrate. Residue 111–112 (GF) participates in pyridoxal 5'-phosphate binding. H137 lines the substrate pocket. The pyridoxal 5'-phosphate site is built by S183, H211, and T240. K243 bears the N6-(pyridoxal phosphate)lysine mark. T357 is a substrate binding site.

The protein belongs to the class-II pyridoxal-phosphate-dependent aminotransferase family. BioF subfamily. As to quaternary structure, homodimer. Requires pyridoxal 5'-phosphate as cofactor.

It carries out the reaction 6-carboxyhexanoyl-[ACP] + L-alanine + H(+) = (8S)-8-amino-7-oxononanoate + holo-[ACP] + CO2. The protein operates within cofactor biosynthesis; biotin biosynthesis. Its function is as follows. Catalyzes the decarboxylative condensation of pimeloyl-[acyl-carrier protein] and L-alanine to produce 8-amino-7-oxononanoate (AON), [acyl-carrier protein], and carbon dioxide. The chain is 8-amino-7-oxononanoate synthase from Xylella fastidiosa (strain M12).